A 362-amino-acid polypeptide reads, in one-letter code: tRNA-specific 2-thiouridylase MnmA (362 aa).

Residues 9-16 (GMSGGVDS) and Met35 contribute to the ATP site. Residues 95 to 97 (NPD) form an interaction with target base in tRNA region. Catalysis depends on Cys100, which acts as the Nucleophile. A disulfide bond links Cys100 and Cys197. Gly124 contacts ATP. Residues 147–149 (KDQ) form an interaction with tRNA region. Residue Cys197 is the Cysteine persulfide intermediate of the active site. The interaction with tRNA stretch occupies residues 309–310 (RY).

Belongs to the MnmA/TRMU family.

Its subcellular location is the cytoplasm. It carries out the reaction S-sulfanyl-L-cysteinyl-[protein] + uridine(34) in tRNA + AH2 + ATP = 2-thiouridine(34) in tRNA + L-cysteinyl-[protein] + A + AMP + diphosphate + H(+). Its function is as follows. Catalyzes the 2-thiolation of uridine at the wobble position (U34) of tRNA, leading to the formation of s(2)U34. In Cupriavidus pinatubonensis (strain JMP 134 / LMG 1197) (Cupriavidus necator (strain JMP 134)), this protein is tRNA-specific 2-thiouridylase MnmA.